The primary structure comprises 660 residues: PAN2-PAN3 deadenylation complex subunit PAN3 (660 aa).

The segment at 7-36 (SAKDTFCKNVLIYGYCKYENKGCAFSHTVK) adopts a C3H1-type zinc-finger fold. Disordered regions lie at residues 36–60 (KPTSSVPGSQGSNATTNSSGNTNAD) and 150–186 (SPVMAQSVSTPGAKANGNIQHNPYLPGNAGTPQPTSA). Residues 43–59 (GSQGSNATTNSSGNTNA) are compositionally biased toward low complexity. Positions 59–79 (ADMKKKFNFNTPSFQPSTVPN) match the PABPC-interacting motif-2 (PAM-2) motif. Positions 150–159 (SPVMAQSVST) are enriched in polar residues. The tract at residues 252-528 (QTLPRSNLPD…LQEFNRNHLS (277 aa)) is pseudokinase domain. ATP-binding positions include Arg-304, 358–365 (DYFPNSNT), and 415–416 (SK). The stretch at 529 to 567 (RRILNFCSNAQDSQDFMESQLSTELENARVFRLITKLNF) forms a coiled coil. Residues 568–660 (IIDRPEYDND…DSAFRTLTRG (93 aa)) are knob domain.

It belongs to the protein kinase superfamily. PAN3 family. As to quaternary structure, homodimer. Forms a heterotrimer with a catalytic subunit PAN2 to form the poly(A)-nuclease (PAN) deadenylation complex. Interacts (via PAM-2 motif) with poly(A)-binding protein PAB1 (via PABC domain), conferring substrate specificity of the enzyme complex.

The protein resides in the cytoplasm. Regulatory subunit of the poly(A)-nuclease (PAN) deadenylation complex, one of two cytoplasmic mRNA deadenylases involved in mRNA turnover. PAN specifically shortens poly(A) tails of RNA and the activity is stimulated by poly(A)-binding protein PAB1. PAN deadenylation is followed by rapid degradation of the shortened mRNA tails by the CCR4-NOT complex. Deadenylated mRNAs are then degraded by two alternative mechanisms, namely exosome-mediated 3'-5' exonucleolytic degradation, or deadenylation-dependent mRNA decaping and subsequent 5'-3' exonucleolytic degradation by XRN1. May also be involved in post-transcriptional maturation of mRNA poly(A) tails. PAN3 acts as a positive regulator for PAN activity, recruiting the catalytic subunit PAN2 to mRNA via its interaction with RNA and with PAB1. The protein is PAN2-PAN3 deadenylation complex subunit PAN3 of Debaryomyces hansenii (strain ATCC 36239 / CBS 767 / BCRC 21394 / JCM 1990 / NBRC 0083 / IGC 2968) (Yeast).